A 492-amino-acid chain; its full sequence is Regulatory protein ViaA (492 aa).

It belongs to the ViaA family. As to quaternary structure, homodimer. Interacts with RavA.

The protein localises to the cytoplasm. Its function is as follows. Component of the RavA-ViaA chaperone complex, which may act on the membrane to optimize the function of some of the respiratory chains. ViaA stimulates the ATPase activity of RavA. This chain is Regulatory protein ViaA, found in Pectobacterium atrosepticum (strain SCRI 1043 / ATCC BAA-672) (Erwinia carotovora subsp. atroseptica).